Consider the following 128-residue polypeptide: Centrosomal protein 15 (128 aa).

The protein resides in the cell projection. The protein localises to the cilium. Its function is as follows. May play a role in ciliary assembly. This Homo sapiens (Human) protein is Centrosomal protein 15.